The sequence spans 1501 residues: Neither inactivation nor afterpotential protein C (1501 aa).

In terms of domain architecture, Protein kinase spans 16–282 (FEIYEEIAQG…MVEMVEHPFL (267 aa)). ATP contacts are provided by residues 22-30 (IAQGVNAKV) and lysine 45. The active-site Proton acceptor is the aspartate 145. Position 183 is a phosphoserine (serine 183). A Myosin motor domain is found at 332 to 1037 (MYPEDLAALE…FLARLYELQV (706 aa)). Residues 913-934 (LTLLKMLSQNANLGVHFVRCIR) are actin-binding. IQ domains are found at residues 1036–1065 (QVKK…FKLG) and 1072–1101 (HDVA…EKSG). The interaction with rtp stretch occupies residues 1043-1271 (VQSMMRALLA…RMGESDNIYN (229 aa)). Residues 1066–1501 (KKGPEHHDVA…ITLSGYAVDI (436 aa)) form a non alpha-helical, C-terminal domain region. Disordered stretches follow at residues 1308 to 1364 (NWGV…DPVR) and 1390 to 1473 (KTNY…EDSN). The segment covering 1326–1335 (APPPPPPPMP) has biased composition (pro residues). A compositionally biased stretch (low complexity) spans 1336–1358 (SSNYYRNNPNQQQRNYQQRSSYP). Residues 1405-1414 (NNRRGSDSGD) show a composition bias toward basic and acidic residues. The segment covering 1449-1463 (FGQQQRAPTLRQSPA) has biased composition (polar residues).

It in the C-terminal section; belongs to the TRAFAC class myosin-kinesin ATPase superfamily. Myosin family. In the N-terminal section; belongs to the protein kinase superfamily. Ser/Thr protein kinase family. In terms of assembly, interacts with rtp. Expressed in the phototransducing compartment of photoreceptor cells, the rhabdomeres (at protein level).

The protein localises to the cytoplasm. It localises to the cytoskeleton. It is found in the nucleus. The protein resides in the membrane. Its subcellular location is the cell projection. The protein localises to the rhabdomere membrane. It carries out the reaction L-seryl-[protein] + ATP = O-phospho-L-seryl-[protein] + ADP + H(+). The catalysed reaction is L-threonyl-[protein] + ATP = O-phospho-L-threonyl-[protein] + ADP + H(+). Functionally, required for photoreceptor cell function. The ninaC proteins combines putative serine/threonine-protein kinase and myosin activities. Essential for the expression and stability of the rtp protein in the photoreceptors. The rtp/ninaC complex is required for stability of inad and inac and the normal termination of phototransduction in the retina. This Drosophila melanogaster (Fruit fly) protein is Neither inactivation nor afterpotential protein C (ninaC).